Here is a 557-residue protein sequence, read N- to C-terminus: Potassium-transporting ATPase potassium-binding subunit (557 aa).

A run of 12 helical transmembrane segments spans residues 5-25, 63-83, 132-152, 170-190, 253-273, 283-303, 329-349, 356-376, 379-399, 416-436, 484-504, and 526-546; these read GFLLIATFLLVLMVLARPLGS, LSAILGLNILGLAVLFFMLLG, GLTVQNFLSAASGIAVIFALI, LLRITLWVLTPVALLIALFFI, FVQMLAIFLIPTALCFAFGEV, LLWAMSVIFVICVGVVMWAEV, VLVSSLFAVVTTAASCGAVIA, ALGGMVPMWLMQIGEVVFGGV, GLYGMMLFVLLAVFIAGLMIG, LTALAILVTPTLVLMGAALAM, LLALCMFVGRFGVIIPVMAIA, and LFVGLLIGTVLLVGALTFIPA.

It belongs to the KdpA family. In terms of assembly, the system is composed of three essential subunits: KdpA, KdpB and KdpC.

Its subcellular location is the cell inner membrane. In terms of biological role, part of the high-affinity ATP-driven potassium transport (or Kdp) system, which catalyzes the hydrolysis of ATP coupled with the electrogenic transport of potassium into the cytoplasm. This subunit binds the periplasmic potassium ions and delivers the ions to the membrane domain of KdpB through an intramembrane tunnel. This Escherichia coli O127:H6 (strain E2348/69 / EPEC) protein is Potassium-transporting ATPase potassium-binding subunit.